The following is a 402-amino-acid chain: 2,3-bisphosphoglycerate-independent phosphoglycerate mutase 2 (402 aa).

This sequence belongs to the BPG-independent phosphoglycerate mutase family. A-PGAM subfamily.

It carries out the reaction (2R)-2-phosphoglycerate = (2R)-3-phosphoglycerate. It participates in carbohydrate degradation; glycolysis; pyruvate from D-glyceraldehyde 3-phosphate: step 3/5. Functionally, catalyzes the interconversion of 2-phosphoglycerate and 3-phosphoglycerate. This is 2,3-bisphosphoglycerate-independent phosphoglycerate mutase 2 (apgM2) from Methanothermobacter thermautotrophicus (strain ATCC 29096 / DSM 1053 / JCM 10044 / NBRC 100330 / Delta H) (Methanobacterium thermoautotrophicum).